The chain runs to 211 residues: Transcriptional regulator NarO (211 aa).

Positions 154-205 (LTARQREVLETAHEMGYFEHPREANATEVAAALDINRSTFTEHLSAAQSKLL) constitute an HTH bat-type domain.

Activates transcription of the denitrifying genes (nitrate reductase narA and nitrite reductase nirK) under anaerobic conditions. The chain is Transcriptional regulator NarO from Haloferax volcanii (strain ATCC 29605 / DSM 3757 / JCM 8879 / NBRC 14742 / NCIMB 2012 / VKM B-1768 / DS2) (Halobacterium volcanii).